We begin with the raw amino-acid sequence, 185 residues long: Ribosome-recycling factor (185 aa).

Belongs to the RRF family.

The protein localises to the cytoplasm. In terms of biological role, responsible for the release of ribosomes from messenger RNA at the termination of protein biosynthesis. May increase the efficiency of translation by recycling ribosomes from one round of translation to another. The protein is Ribosome-recycling factor of Halothermothrix orenii (strain H 168 / OCM 544 / DSM 9562).